The primary structure comprises 696 residues: F-box/LRR-repeat protein 5 (696 aa).

Residues 1–159 (MAPFPDEVDV…IKKQVIAQHS (159 aa)) are hemerythrin-like. Fe(3+) contacts are provided by histidine 15, histidine 57, glutamate 58, glutamate 61, histidine 80, histidine 126, and glutamate 130. Residues 205–251 (STHISQLPTEILLCLFRYLGPEDLCHCGQVCSAWSDLAKTGSLWRHL) enclose the F-box domain. LRR repeat units lie at residues 343-367 (SSTVSSKMVRQILSLCPNLTHLDLT), 368-395 (QTDVTDSAFDSWSSLWACLSLEHLDLSG), 396-421 (CEKLTDRTLKKLSLGLGDLASPTCSE), 582-612 (CSSGGQLCLECDNRTDPSDGRRSLRFLSLSG), 613-640 (CYQVTDLGLRALSQRGGLPLLEHLNLSG), and 641-666 (CLLITEVGLQELVSACPALNDEHFYY). The [2Fe-2S] cluster site is built by cysteine 667, cysteine 681, cysteine 691, and cysteine 692.

As to quaternary structure, part of a SCF (SKP1-cullin-F-box) protein ligase complex. [2Fe-2S] cluster is required as a cofactor. Ubiquitinated upon iron and oxygen depletion, leading to its degradation by the proteasome. Ubiquitination is regulated by the hemerythrin-like region that acts as an oxygen and iron sensor.

The protein localises to the cytoplasm. The protein resides in the perinuclear region. It localises to the nucleus. It functions in the pathway protein modification; protein ubiquitination. Functionally, component of some SCF (SKP1-cullin-F-box) protein ligase complex that plays a central role in iron homeostasis by promoting the ubiquitination and subsequent degradation of ireb2/irp2. Upon high iron and oxygen level, it specifically recognizes and binds ireb2/irp2, promoting its ubiquitination and degradation by the proteasome. The protein is F-box/LRR-repeat protein 5 (fbxl5) of Salmo salar (Atlantic salmon).